Here is a 143-residue protein sequence, read N- to C-terminus: Large ribosomal subunit protein uL16c (143 aa).

It belongs to the universal ribosomal protein uL16 family. In terms of assembly, part of the 50S ribosomal subunit.

Its subcellular location is the plastid. The protein resides in the chloroplast. The polypeptide is Large ribosomal subunit protein uL16c (Marchantia polymorpha (Common liverwort)).